Reading from the N-terminus, the 359-residue chain is Src kinase-associated phosphoprotein 1 (359 aa).

A PH domain is found at 107–210 (NVIKQGYLEK…WVDQISFLLK (104 aa)). A phosphotyrosine mark is found at Tyr142, Tyr219, and Tyr232. Positions 219 to 237 (YEEDEEEEEKEETYDDIDG) are enriched in acidic residues. Residues 219–239 (YEEDEEEEEKEETYDDIDGFD) form a disordered region. Phosphotyrosine; by FYN is present on residues Tyr271 and Tyr295. Residues 290 to 295 (RKGVDY) are interaction with FYB1. The SH3 domain occupies 294 to 355 (DYASYYQGLW…PKEYLTTAFE (62 aa)).

This sequence belongs to the SKAP family. As to quaternary structure, homodimer. Interacts with FYN. Interacts with PTPRC. Interacts with GRB2 when phosphorylated on Tyr-271. Interacts with FYB1, which is required for SKAP2 protein stability. Part of a complex consisting of SKAP1, FYB1 and CLNK. Interacts with RASGRP1. Interacts with FYB2. Phosphorylated on tyrosines. Phosphorylation by FYN on Tyr-271 is required for GRB2 interaction. Phosphorylation by FYN on Tyr-295 abolishes interaction with FYB1. Tyr-232 is dephosphorylated by PTPRC. In terms of tissue distribution, highly expressed in thymocytes and peripheral blood lymphocytes. Also expressed in spleen cells and testis. Present in T-cells (at protein level).

It localises to the cytoplasm. It is found in the nucleus. The protein localises to the cell membrane. Its function is as follows. Positively regulates T-cell receptor signaling by enhancing the MAP kinase pathway. Required for optimal conjugation between T-cells and antigen-presenting cells by promoting the clustering of integrin ITGAL on the surface of T-cells. May be involved in high affinity immunoglobulin epsilon receptor signaling in mast cells. This Homo sapiens (Human) protein is Src kinase-associated phosphoprotein 1 (SKAP1).